A 201-amino-acid polypeptide reads, in one-letter code: Dephospho-CoA kinase (201 aa).

The DPCK domain maps to 3–201 (IIGLTGGMAA…ALLHRLREAS (199 aa)). 11–16 (AAGKST) lines the ATP pocket.

Belongs to the CoaE family.

It localises to the cytoplasm. The enzyme catalyses 3'-dephospho-CoA + ATP = ADP + CoA + H(+). Its pathway is cofactor biosynthesis; coenzyme A biosynthesis; CoA from (R)-pantothenate: step 5/5. In terms of biological role, catalyzes the phosphorylation of the 3'-hydroxyl group of dephosphocoenzyme A to form coenzyme A. The protein is Dephospho-CoA kinase of Gluconobacter oxydans (strain 621H) (Gluconobacter suboxydans).